We begin with the raw amino-acid sequence, 592 residues long: Protein kinase C zeta type (592 aa).

Positions 15–98 (RVRLKAHYGG…EVLIIHVFPS (84 aa)) constitute a PB1 domain. Residues 79 to 145 (AFRLACQGRD…KRFNRRAYCG (67 aa)) form an interaction with SQSTM1 region. A Phorbol-ester/DAG-type zinc finger spans residues 130–180 (GHLFQAKRFNRRAYCGQCSERIWGLARQGYRCINCKLLVHKRCHVLVPLTC). In terms of domain architecture, Protein kinase spans 252 to 518 (FDLIRVIGRG…FSDIKSHAFF (267 aa)). Residues 258–266 (IGRGSYAKV) and K281 each bind ATP. The active-site Proton acceptor is the D376. The residue at position 410 (T410) is a Phosphothreonine; by PDPK1 and PI3K. The AGC-kinase C-terminal domain occupies 519–590 (RSIDWDLLEK…INPLLLSAEE (72 aa)). Residue T560 is modified to Phosphothreonine. Position 591 is a phosphoserine (S591).

The protein belongs to the protein kinase superfamily. AGC Ser/Thr protein kinase family. PKC subfamily. As to quaternary structure, interacts with PARD6A, PARD6B and PARD6G. Part of a complex with PARD3, PARD6A or PARD6B or PARD6G and CDC42 or RAC1. Interacts with ADAP1/CENTA1. Forms a ternary complex with SQSTM1 and KCNAB2. Forms another ternary complex with SQSTM1 and GABRR3. Forms a complex with SQSTM1 and MAP2K5. Interacts (via the protein kinase domain) with WWC1. Forms a tripartite complex with WWC1 and DDR1, but predominantly in the absence of collagen. Component of the Par polarity complex, composed of at least phosphorylated PRKCZ, PARD3 and TIAM1. Interacts with PDPK1 (via N-terminal region). Interacts with WDFY2 (via WD repeats 1-3). Interacts with VAMP2. Forms a complex with WDFY2 and VAMP2. Interacts with APPL1. Interacts with WWC1, WWC2 and WWC3. CDH5 is required for its phosphorylation at Thr-410. Phosphorylated by protein kinase PDPK1; phosphorylation is inhibited by the apoptotic C-terminal cleavage product of PKN2. Phosphorylation at Thr-410 by PI3K activates the kinase. As to expression, isoform 1: In brain, expressed in hippocampus, neocortex and cerebellum (at protein level). Also expressed in lung, liver, kidney, testis and to a lesser extent in pancreas, intestine and skin (at protein level). Isoform 2: Specifically expressed in brain where it localizes to the hippocampus, neocortex and cerebellum (at protein level).

It is found in the cytoplasm. The protein resides in the endosome. The protein localises to the cell junction. It localises to the membrane. It catalyses the reaction L-seryl-[protein] + ATP = O-phospho-L-seryl-[protein] + ADP + H(+). The catalysed reaction is L-threonyl-[protein] + ATP = O-phospho-L-threonyl-[protein] + ADP + H(+). Its activity is regulated as follows. Atypical PKCs (PRKCI and PRKCZ) exhibit an elevated basal enzymatic activity (that may be due to the interaction with SMG1 or SQSTM1) and are not regulated by diacylglycerol, phosphatidylserine, phorbol esters or calcium ions. Two specific sites, Thr-410 (activation loop of the kinase domain) and Thr-560 (turn motif), need to be phosphorylated for its full activation. Phosphatidylinositol 3,4,5-trisphosphate might be a physiological activator. Isoform 2: Constitutively active. In terms of biological role, calcium- and diacylglycerol-independent serine/threonine-protein kinase that functions in phosphatidylinositol 3-kinase (PI3K) pathway and mitogen-activated protein (MAP) kinase cascade, and is involved in NF-kappa-B activation, mitogenic signaling, cell proliferation, cell polarity, inflammatory response and maintenance of long-term potentiation (LTP). Upon lipopolysaccharide (LPS) treatment in macrophages, or following mitogenic stimuli, functions downstream of PI3K to activate MAP2K1/MEK1-MAPK1/ERK2 signaling cascade independently of RAF1 activation. Required for insulin-dependent activation of AKT3, but may function as an adapter rather than a direct activator. Upon insulin treatment may act as a downstream effector of PI3K and contribute to the activation of translocation of the glucose transporter SLC2A4/GLUT4 and subsequent glucose transport in adipocytes. In EGF-induced cells, binds and activates MAP2K5/MEK5-MAPK7/ERK5 independently of its kinase activity and can activate JUN promoter through MEF2C. Through binding with SQSTM1/p62, functions in interleukin-1 signaling and activation of NF-kappa-B with the specific adapters RIPK1 and TRAF6. Participates in TNF-dependent transactivation of NF-kappa-B by phosphorylating and activating IKBKB kinase, which in turn leads to the degradation of NF-kappa-B inhibitors. In migrating astrocytes, forms a cytoplasmic complex with PARD6A and is recruited by CDC42 to function in the establishment of cell polarity along with the microtubule motor and dynein. In association with FEZ1, stimulates neuronal differentiation in PC12 cells. In the inflammatory response, is required for the T-helper 2 (Th2) differentiation process, including interleukin production, efficient activation of JAK1 and the subsequent phosphorylation and nuclear translocation of STAT6. May be involved in development of allergic airway inflammation (asthma), a process dependent on Th2 immune response. In the NF-kappa-B-mediated inflammatory response, can relieve SETD6-dependent repression of NF-kappa-B target genes by phosphorylating the RELA subunit at 'Ser-311'. Phosphorylates VAMP2 in vitro. Phosphorylates and activates LRRK1, which phosphorylates RAB proteins involved in intracellular trafficking. Involved in late synaptic long term potentiation phase in CA1 hippocampal cells and long term memory maintenance. In Rattus norvegicus (Rat), this protein is Protein kinase C zeta type (Prkcz).